Reading from the N-terminus, the 264-residue chain is Formamidopyrimidine-DNA glycosylase (264 aa).

The active-site Schiff-base intermediate with DNA is Pro2. The active-site Proton donor is Glu3. Lys58 functions as the Proton donor; for beta-elimination activity in the catalytic mechanism. 3 residues coordinate DNA: His89, Arg107, and Arg144. The FPG-type zinc-finger motif lies at 229-263 (RVYQRTGEPCLNCKTPIRRVIVTQRSSHFCPHCQK). Residue Arg253 is the Proton donor; for delta-elimination activity of the active site.

Belongs to the FPG family. Monomer. The cofactor is Zn(2+).

The enzyme catalyses Hydrolysis of DNA containing ring-opened 7-methylguanine residues, releasing 2,6-diamino-4-hydroxy-5-(N-methyl)formamidopyrimidine.. It catalyses the reaction 2'-deoxyribonucleotide-(2'-deoxyribose 5'-phosphate)-2'-deoxyribonucleotide-DNA = a 3'-end 2'-deoxyribonucleotide-(2,3-dehydro-2,3-deoxyribose 5'-phosphate)-DNA + a 5'-end 5'-phospho-2'-deoxyribonucleoside-DNA + H(+). Functionally, involved in base excision repair of DNA damaged by oxidation or by mutagenic agents. Acts as a DNA glycosylase that recognizes and removes damaged bases. Has a preference for oxidized purines, such as 7,8-dihydro-8-oxoguanine (8-oxoG). Has AP (apurinic/apyrimidinic) lyase activity and introduces nicks in the DNA strand. Cleaves the DNA backbone by beta-delta elimination to generate a single-strand break at the site of the removed base with both 3'- and 5'-phosphates. The polypeptide is Formamidopyrimidine-DNA glycosylase (Solibacter usitatus (strain Ellin6076)).